A 651-amino-acid polypeptide reads, in one-letter code: MEGPPGDLKHLFIEWLQEAAINATKKGTKAAILYNKALGSVRNYPLPINDPKTLKSVQFVGDKTCIHLSKKLEEYCKLNNFELPVAFGGLINGGVGEKRKHEVSDTSNLPDAKPKKQRKQKQYIPRKRSGGYAILLALYFGDKKKTGLTKEEIIQRATPYSDKSFKSNPSANEFYSAWSSIKSLQTHDLVDSSGRSSKSYFLTEEGYELAKQLKDAEGFESSPITNHIADLSFDNQVRVTPDSSYSKISQQLDSSPLMKTKNNKDRYGLGPSRLSSTRERILDLSSSPRLISSPLKPKDFVLRESLSSHNSTRPLQDRESISKAEDGINTKTKARLVHDASKRIYDGTNYDIWVPGEFEIILIIDNREIRSQRDRDFFQTRLTSLKVECDVRPLSVGDVVWTAKHKKTGREVILNYICERKRLDDLVSSIKDGRFQEQKNRLKKSGMKQFYYLVEDVVTSDMNKFGDMSDAIQTAMSMTMTISNFYLKRFKSIEDTIAFLASLTQVIKDQFAKNKTNLLVLKARSIKNQAEYSSLIAKFKEKFENRSTSYECAHLFSTFQDSMGKTGMMTVKETFILMLMGIRGVSLERAVAIQNRFKTPKNLIEFFFVENNHLSELDKKQLMMDVFKNEIGNKKIGKVLSEKIYDVWGCV.

Residues 99–124 form a disordered region; the sequence is RKHEVSDTSNLPDAKPKKQRKQKQYI. The span at 115–124 shows a compositional bias: basic residues; that stretch reads KKQRKQKQYI. Positions 361–458 constitute an ERCC4 domain; the sequence is ILIIDNREIR…QFYYLVEDVV (98 aa).

It belongs to the XPF family. As to quaternary structure, interacts with EME1. Mg(2+) serves as cofactor.

Its subcellular location is the nucleus. In terms of biological role, interacts with EME1 to form a DNA structure-specific endonuclease with substrate preference for branched DNA structures with a 5'-end at the branch nick. Typical substrates include 3'-flap structures, D-loops, replication forks and nicked Holliday junctions. May be required in mitosis for the processing of stalled or collapsed replication fork intermediates. May be required in meiosis for the repair of meiosis-specific double strand breaks subsequent to single-end invasion (SEI). This is Crossover junction endonuclease MUS81 (MUS81) from Debaryomyces hansenii (strain ATCC 36239 / CBS 767 / BCRC 21394 / JCM 1990 / NBRC 0083 / IGC 2968) (Yeast).